Consider the following 159-residue polypeptide: Succinate dehydrogenase assembly factor 2, mitochondrial (159 aa).

The N-terminal 14 residues, 1-14 (MASFCLSRCCALRG), are a transit peptide targeting the mitochondrion.

It belongs to the SDHAF2 family. In terms of assembly, interacts with the flavoprotein subunit within the SDH catalytic dimer.

It localises to the mitochondrion matrix. In terms of biological role, plays an essential role in the assembly of succinate dehydrogenase (SDH), an enzyme complex (also referred to as respiratory complex II) that is a component of both the tricarboxylic acid (TCA) cycle and the mitochondrial electron transport chain, and which couples the oxidation of succinate to fumarate with the reduction of ubiquinone (coenzyme Q) to ubiquinol. Required for flavinylation (covalent attachment of FAD) of the flavoprotein subunit of the SDH catalytic dimer. The chain is Succinate dehydrogenase assembly factor 2, mitochondrial from Culex quinquefasciatus (Southern house mosquito).